A 316-amino-acid chain; its full sequence is Golgi to ER traffic protein 2 (316 aa).

The disordered stretch occupies residues 1–75 (MATELSDAEK…SDEEVEKSTK (75 aa)). Residues 1–167 (MATELSDAEK…LKYYKFKVSK (167 aa)) are Cytoplasmic-facing. The span at 7 to 19 (DAEKRKLLRERRQ) shows a compositional bias: basic and acidic residues. Polar residues-rich tracts occupy residues 22 to 48 (FSNG…STSV) and 56 to 65 (PSGNKKSSNV). A helical transmembrane segment spans residues 168–187 (LKSYIILIKWALLAPYVYFI). Residues 188–209 (MHPNPTVLQASNLLSQIVERSN) are Lumenal-facing. A helical membrane pass occupies residues 210-229 (FFSIFTGLEIVFISIYYQML). Residues 230–276 (KKLQRDNNVTATQNAGGILKYLTMIPEGILPIRNIQGKIGLALEYFD) lie on the Cytoplasmic side of the membrane. Residues 277 to 297 (VASMYVTDICFVLVLFGVMKY) form a helical membrane-spanning segment. Residues 298–316 (YHSSFPISVPIEPPIAGIQ) lie on the Lumenal side of the membrane.

This sequence belongs to the GET2 family. Component of the Golgi to ER traffic (GET) complex, which is composed of GET1, GET2 and GET3. Within the complex, GET1 and GET2 form a heterotetramer which is stabilized by phosphatidylinositol binding and which binds to the GET3 homodimer.

The protein localises to the endoplasmic reticulum membrane. The protein resides in the golgi apparatus membrane. Its function is as follows. Required for the post-translational delivery of tail-anchored (TA) proteins to the endoplasmic reticulum. Together with GET1, acts as a membrane receptor for soluble GET3, which recognizes and selectively binds the transmembrane domain of TA proteins in the cytosol. The GET complex cooperates with the HDEL receptor ERD2 to mediate the ATP-dependent retrieval of resident ER proteins that contain a C-terminal H-D-E-L retention signal from the Golgi to the ER. In Kluyveromyces lactis (strain ATCC 8585 / CBS 2359 / DSM 70799 / NBRC 1267 / NRRL Y-1140 / WM37) (Yeast), this protein is Golgi to ER traffic protein 2.